The chain runs to 297 residues: MNLGALVSETRNPATMGLDEMSTLEMVSCFNQEDRKVPEAIEKVLPAIAQAVDLAAAALKAGGRLIYLGAGTSGRLGVLDASECPPTFGVPHGMVIGLIAGGPGALLKAVEGAEDDAALGEADLVALDLTATDMVVGLAASGRTPYVIGALRYARQLGCPTAAISCNPDSPIAHEVQVAISPVVGPEALTGSTRLKSGTAQKLVLNMLSTGAMVKLGKVYENLMVDVKATNVKLVDRACRIVVEATGAERSQAEAALTQTGFEVKPAILMILAGIDAQEAQQRLQQHDGYLRAALTR.

In terms of domain architecture, SIS spans 55–218; sequence AAAALKAGGR…STGAMVKLGK (164 aa). E83 serves as the catalytic Proton donor. E114 is a catalytic residue.

The protein belongs to the GCKR-like family. MurNAc-6-P etherase subfamily. As to quaternary structure, homodimer.

The catalysed reaction is N-acetyl-D-muramate 6-phosphate + H2O = N-acetyl-D-glucosamine 6-phosphate + (R)-lactate. The protein operates within amino-sugar metabolism; 1,6-anhydro-N-acetylmuramate degradation. It participates in amino-sugar metabolism; N-acetylmuramate degradation. It functions in the pathway cell wall biogenesis; peptidoglycan recycling. In terms of biological role, specifically catalyzes the cleavage of the D-lactyl ether substituent of MurNAc 6-phosphate, producing GlcNAc 6-phosphate and D-lactate. Together with AnmK, is also required for the utilization of anhydro-N-acetylmuramic acid (anhMurNAc) either imported from the medium or derived from its own cell wall murein, and thus plays a role in cell wall recycling. This Serratia proteamaculans (strain 568) protein is N-acetylmuramic acid 6-phosphate etherase.